Here is a 356-residue protein sequence, read N- to C-terminus: Histidinol-phosphate aminotransferase (356 aa).

N6-(pyridoxal phosphate)lysine is present on K214.

It belongs to the class-II pyridoxal-phosphate-dependent aminotransferase family. Histidinol-phosphate aminotransferase subfamily. Homodimer. The cofactor is pyridoxal 5'-phosphate.

The enzyme catalyses L-histidinol phosphate + 2-oxoglutarate = 3-(imidazol-4-yl)-2-oxopropyl phosphate + L-glutamate. It participates in amino-acid biosynthesis; L-histidine biosynthesis; L-histidine from 5-phospho-alpha-D-ribose 1-diphosphate: step 7/9. The sequence is that of Histidinol-phosphate aminotransferase from Escherichia fergusonii (strain ATCC 35469 / DSM 13698 / CCUG 18766 / IAM 14443 / JCM 21226 / LMG 7866 / NBRC 102419 / NCTC 12128 / CDC 0568-73).